The primary structure comprises 316 residues: 4-hydroxy-3-methylbut-2-enyl diphosphate reductase (316 aa).

Cysteine 12 is a [4Fe-4S] cluster binding site. Residues histidine 41 and histidine 74 each coordinate (2E)-4-hydroxy-3-methylbut-2-enyl diphosphate. 2 residues coordinate dimethylallyl diphosphate: histidine 41 and histidine 74. Positions 41 and 74 each coordinate isopentenyl diphosphate. Cysteine 96 provides a ligand contact to [4Fe-4S] cluster. A (2E)-4-hydroxy-3-methylbut-2-enyl diphosphate-binding site is contributed by histidine 124. Histidine 124 lines the dimethylallyl diphosphate pocket. Isopentenyl diphosphate is bound at residue histidine 124. Glutamate 126 (proton donor) is an active-site residue. (2E)-4-hydroxy-3-methylbut-2-enyl diphosphate is bound at residue threonine 167. Cysteine 197 serves as a coordination point for [4Fe-4S] cluster. Serine 225, serine 226, asparagine 227, and serine 269 together coordinate (2E)-4-hydroxy-3-methylbut-2-enyl diphosphate. Dimethylallyl diphosphate is bound by residues serine 225, serine 226, asparagine 227, and serine 269. The isopentenyl diphosphate site is built by serine 225, serine 226, asparagine 227, and serine 269.

This sequence belongs to the IspH family. In terms of assembly, homodimer. [4Fe-4S] cluster is required as a cofactor.

It catalyses the reaction isopentenyl diphosphate + 2 oxidized [2Fe-2S]-[ferredoxin] + H2O = (2E)-4-hydroxy-3-methylbut-2-enyl diphosphate + 2 reduced [2Fe-2S]-[ferredoxin] + 2 H(+). It carries out the reaction dimethylallyl diphosphate + 2 oxidized [2Fe-2S]-[ferredoxin] + H2O = (2E)-4-hydroxy-3-methylbut-2-enyl diphosphate + 2 reduced [2Fe-2S]-[ferredoxin] + 2 H(+). The protein operates within isoprenoid biosynthesis; dimethylallyl diphosphate biosynthesis; dimethylallyl diphosphate from (2E)-4-hydroxy-3-methylbutenyl diphosphate: step 1/1. It functions in the pathway isoprenoid biosynthesis; isopentenyl diphosphate biosynthesis via DXP pathway; isopentenyl diphosphate from 1-deoxy-D-xylulose 5-phosphate: step 6/6. Its function is as follows. Catalyzes the conversion of 1-hydroxy-2-methyl-2-(E)-butenyl 4-diphosphate (HMBPP) into a mixture of isopentenyl diphosphate (IPP) and dimethylallyl diphosphate (DMAPP). Acts in the terminal step of the DOXP/MEP pathway for isoprenoid precursor biosynthesis. The protein is 4-hydroxy-3-methylbut-2-enyl diphosphate reductase of Salmonella paratyphi A (strain ATCC 9150 / SARB42).